The chain runs to 177 residues: MSIDNIKSALPEYAKDLKLNLGSIANTTELTEQQLWGALVATAAATKNARLLREISEDALDILSEEAYNAALGAAAIMGMNNVFYRTKGQLDGKYDDLRAGLRMNIIGNPGVAKEDFELWSLAVSAINGCGHCLAAHEKTLRDADVARTTIFEAIRLASIVSGVAQALLTADTLAAV.

The active-site Proton donor is cysteine 130. A disulfide bond links cysteine 130 and cysteine 133. The Cysteine sulfenic acid (-SOH) intermediate role is filled by cysteine 133.

The protein belongs to the AhpD family. Homotrimer.

The catalysed reaction is N(6)-[(R)-dihydrolipoyl]-L-lysyl-[lipoyl-carrier protein] + a hydroperoxide = N(6)-[(R)-lipoyl]-L-lysyl-[lipoyl-carrier protein] + an alcohol + H2O. Functionally, antioxidant protein with alkyl hydroperoxidase activity. Required for the reduction of the AhpC active site cysteine residues and for the regeneration of the AhpC enzyme activity. This chain is Alkyl hydroperoxide reductase AhpD, found in Mycolicibacterium smegmatis (strain ATCC 700084 / mc(2)155) (Mycobacterium smegmatis).